The following is a 334-amino-acid chain: Protein-methionine-sulfoxide reductase catalytic subunit MsrP (334 aa).

The tat-type signal signal peptide spans 1–44; sequence MKKIRKLTEADVTAESAFFMQRRQVLKALGISAAALSLPNAAHA. Residues asparagine 88, 91-92, cysteine 146, threonine 181, asparagine 233, arginine 238, and 249-251 contribute to the Mo-molybdopterin site; these read YE and GIK.

Belongs to the MsrP family. Heterodimer of a catalytic subunit (MsrP) and a heme-binding subunit (MsrQ). Mo-molybdopterin serves as cofactor. In terms of processing, predicted to be exported by the Tat system. The position of the signal peptide cleavage has not been experimentally proven.

It localises to the periplasm. The enzyme catalyses L-methionyl-[protein] + a quinone + H2O = L-methionyl-(S)-S-oxide-[protein] + a quinol. It carries out the reaction L-methionyl-[protein] + a quinone + H2O = L-methionyl-(R)-S-oxide-[protein] + a quinol. In terms of biological role, part of the MsrPQ system that repairs oxidized periplasmic proteins containing methionine sulfoxide residues (Met-O), using respiratory chain electrons. Thus protects these proteins from oxidative-stress damage caused by reactive species of oxygen and chlorine generated by the host defense mechanisms. MsrPQ is essential for the maintenance of envelope integrity under bleach stress, rescuing a wide series of structurally unrelated periplasmic proteins from methionine oxidation, including the primary periplasmic chaperone SurA and the lipoprotein Pal. The catalytic subunit MsrP is non-stereospecific, being able to reduce both (R-) and (S-) diastereoisomers of methionine sulfoxide. This chain is Protein-methionine-sulfoxide reductase catalytic subunit MsrP, found in Escherichia fergusonii (strain ATCC 35469 / DSM 13698 / CCUG 18766 / IAM 14443 / JCM 21226 / LMG 7866 / NBRC 102419 / NCTC 12128 / CDC 0568-73).